A 336-amino-acid chain; its full sequence is Myb family transcription factor PHL8 (336 aa).

Positions 31-91 (TDAKPRLKWT…HLQKYRLGKS (61 aa)) constitute an HTH myb-type domain. Positions 62–87 (PKGLMKVMEIPGLTLYHLKSHLQKYR) form a DNA-binding region, H-T-H motif. The interval 100-134 (EVSSASENQEVESKNDSRDLRGCSVTEENSNPAKE) is disordered. Residues 110–120 (VESKNDSRDLR) are compositionally biased toward basic and acidic residues. Positions 139-159 (TEALQMQMEVQKKLHEQIEVQ) form a coiled coil. The LHEQLE signature appears at 152-157 (LHEQIE).

The protein belongs to the MYB-CC family.

It is found in the nucleus. In Arabidopsis thaliana (Mouse-ear cress), this protein is Myb family transcription factor PHL8.